The chain runs to 232 residues: Small ribosomal subunit protein uS2 (232 aa).

This sequence belongs to the universal ribosomal protein uS2 family.

This Heliobacterium modesticaldum (strain ATCC 51547 / Ice1) protein is Small ribosomal subunit protein uS2.